The following is a 591-amino-acid chain: L-fucose isomerase (591 aa).

Catalysis depends on proton acceptor residues E337 and D361. 3 residues coordinate Mn(2+): E337, D361, and H528.

The protein belongs to the L-fucose isomerase family. Homohexamer. Mn(2+) serves as cofactor.

Its subcellular location is the cytoplasm. It carries out the reaction L-fucose = L-fuculose. It participates in carbohydrate degradation; L-fucose degradation; L-lactaldehyde and glycerone phosphate from L-fucose: step 1/3. Converts the aldose L-fucose into the corresponding ketose L-fuculose. This is L-fucose isomerase from Salmonella arizonae (strain ATCC BAA-731 / CDC346-86 / RSK2980).